The primary structure comprises 718 residues: Probable glycerol-3-phosphate acyltransferase, mitochondrial (718 aa).

Positions H167–D172 match the HXXXXD motif motif. Residues M409–A425 traverse the membrane as a helical segment.

Belongs to the GPAT/DAPAT family.

It localises to the mitochondrion membrane. The enzyme catalyses sn-glycerol 3-phosphate + an acyl-CoA = a 1-acyl-sn-glycero-3-phosphate + CoA. It participates in phospholipid metabolism; CDP-diacylglycerol biosynthesis; CDP-diacylglycerol from sn-glycerol 3-phosphate: step 1/3. The sequence is that of Probable glycerol-3-phosphate acyltransferase, mitochondrial (acl-6) from Caenorhabditis elegans.